A 197-amino-acid chain; its full sequence is Recombination protein RecR (197 aa).

The C4-type zinc-finger motif lies at cysteine 56–cysteine 71. The Toprim domain maps to lysine 79–proline 174.

The protein belongs to the RecR family.

Its function is as follows. May play a role in DNA repair. It seems to be involved in an RecBC-independent recombinational process of DNA repair. It may act with RecF and RecO. The chain is Recombination protein RecR from Saccharophagus degradans (strain 2-40 / ATCC 43961 / DSM 17024).